Reading from the N-terminus, the 293-residue chain is Glutamyl-Q tRNA(Asp) synthetase (293 aa).

L-glutamate contacts are provided by residues 8–12 (RFAPT) and Glu-44. The 'HIGH' region signature appears at 11-21 (PTPSGYLHFGS). The Zn(2+) site is built by Cys-100, Cys-102, Tyr-114, and Cys-118. L-glutamate contacts are provided by Tyr-171 and Arg-189. The short motif at 227–231 (KLGKS) is the 'KMSKS' region element. An ATP-binding site is contributed by Lys-230.

It belongs to the class-I aminoacyl-tRNA synthetase family. GluQ subfamily. Zn(2+) is required as a cofactor.

Its function is as follows. Catalyzes the tRNA-independent activation of glutamate in presence of ATP and the subsequent transfer of glutamate onto a tRNA(Asp). Glutamate is transferred on the 2-amino-5-(4,5-dihydroxy-2-cyclopenten-1-yl) moiety of the queuosine in the wobble position of the QUC anticodon. This is Glutamyl-Q tRNA(Asp) synthetase from Pseudomonas paraeruginosa (strain DSM 24068 / PA7) (Pseudomonas aeruginosa (strain PA7)).